The chain runs to 184 residues: UPF0149 protein PputGB1_5261 (184 aa).

The protein belongs to the UPF0149 family.

The chain is UPF0149 protein PputGB1_5261 from Pseudomonas putida (strain GB-1).